We begin with the raw amino-acid sequence, 356 residues long: Tyrosine recombinase XerS (356 aa).

The Core-binding (CB) domain maps to 16–121; sequence LMPWFVLEYY…ALSCLYKYLT (106 aa). The region spanning 169 to 354 is the Tyr recombinase domain; sequence KFLDYVENEY…VNDEQKNALD (186 aa). Catalysis depends on residues arginine 210, lysine 234, histidine 306, arginine 309, and histidine 332. The active-site O-(3'-phospho-DNA)-tyrosine intermediate is tyrosine 341.

This sequence belongs to the 'phage' integrase family. XerS subfamily.

Its subcellular location is the cytoplasm. With respect to regulation, ftsK is required for recombination. In terms of biological role, site-specific tyrosine recombinase, which acts by catalyzing the cutting and rejoining of the recombining DNA molecules. Essential to convert dimers of the bacterial chromosome into monomers to permit their segregation at cell division. This Streptococcus thermophilus (strain ATCC BAA-250 / LMG 18311) protein is Tyrosine recombinase XerS.